The sequence spans 145 residues: Histone H2B (145 aa).

Residues 1 to 52 (MAPKAAAGKKPAEKKPVEEKKAEEVPAEKKPKAGKKLPKDAGRPDKKKKRAK) are disordered. N6-acetyllysine is present on residues K9, K35, and K36. A compositionally biased stretch (basic and acidic residues) spans 10–44 (KPAEKKPVEEKKAEEVPAEKKPKAGKKLPKDAGRP). K141 participates in a covalent cross-link: Glycyl lysine isopeptide (Lys-Gly) (interchain with G-Cter in ubiquitin).

It belongs to the histone H2B family. In terms of assembly, the nucleosome is a histone octamer containing two molecules each of H2A, H2B, H3 and H4 assembled in one H3-H4 heterotetramer and two H2A-H2B heterodimers. The octamer wraps approximately 147 bp of DNA. Can be acetylated to form H2BK6ac, H2BK33ac and H2BK34ac. In terms of processing, monoubiquitinated to form H2BK143ub1; may give a specific tag for epigenetic transcriptional activation. In terms of tissue distribution, in anthers, floral buds, pollen, petals and fruits.

It localises to the nucleus. The protein localises to the chromosome. Core component of nucleosome. Nucleosomes wrap and compact DNA into chromatin, limiting DNA accessibility to the cellular machineries which require DNA as a template. Histones thereby play a central role in transcription regulation, DNA repair, DNA replication and chromosomal stability. DNA accessibility is regulated via a complex set of post-translational modifications of histones, also called histone code, and nucleosome remodeling. The chain is Histone H2B (HIS2B) from Capsicum annuum (Capsicum pepper).